A 246-amino-acid chain; its full sequence is Ribosomal RNA small subunit methyltransferase J (246 aa).

Residues 115–116 (ER) and aspartate 169 each bind S-adenosyl-L-methionine.

It belongs to the methyltransferase superfamily. RsmJ family.

It localises to the cytoplasm. It catalyses the reaction guanosine(1516) in 16S rRNA + S-adenosyl-L-methionine = N(2)-methylguanosine(1516) in 16S rRNA + S-adenosyl-L-homocysteine + H(+). Functionally, specifically methylates the guanosine in position 1516 of 16S rRNA. This Buchnera aphidicola subsp. Acyrthosiphon pisum (strain 5A) protein is Ribosomal RNA small subunit methyltransferase J.